The primary structure comprises 202 residues: Securin (202 aa).

Positions 1–92 are disordered; it reads MATLIYVDKE…QKQPSFSAKK (92 aa). Ala-2 bears the N-acetylalanine mark. The short motif at 61-64 is the D-box element; it reads RKAL. 2 short sequence motifs (TEK-box) span residues 71-73 and 94-96; these read TEK. An SH3-binding motif is present at residues 163 to 173; the sequence is XPSPVKMPSPP. Ser-165 carries the post-translational modification Phosphoserine; by CDK1.

It belongs to the securin family. In terms of assembly, interacts with RPS10 and DNAJA1. Interacts with the caspase-like ESPL1, and prevents its protease activity probably by covering its active site. Interacts with TP53 and blocks its activity probably by blocking its binding to DNA. Interacts with the Ku 70 kDa subunit of ds-DNA kinase. Interacts with PTTG1IP. Phosphorylated at Ser-165 by CDK1 during mitosis. Post-translationally, phosphorylated in vitro by ds-DNA kinase. In terms of processing, ubiquitinated through 'Lys-11' linkage of ubiquitin moieties by the anaphase promoting complex (APC) at the onset of anaphase, conducting to its degradation. 'Lys-11'-linked ubiquitination is mediated by the E2 ligase UBE2C/UBCH10.

Its subcellular location is the cytoplasm. The protein resides in the nucleus. Its function is as follows. Regulatory protein, which plays a central role in chromosome stability, in the p53/TP53 pathway, and DNA repair. Probably acts by blocking the action of key proteins. During the mitosis, it blocks Separase/ESPL1 function, preventing the proteolysis of the cohesin complex and the subsequent segregation of the chromosomes. At the onset of anaphase, it is ubiquitinated, conducting to its destruction and to the liberation of ESPL1. Its function is however not limited to a blocking activity, since it is required to activate ESPL1. Negatively regulates the transcriptional activity and related apoptosis activity of TP53. The negative regulation of TP53 may explain the strong transforming capability of the protein when it is overexpressed. May also play a role in DNA repair via its interaction with Ku, possibly by connecting DNA damage-response pathways with sister chromatid separation. In Pan troglodytes (Chimpanzee), this protein is Securin (PTTG1).